The sequence spans 292 residues: NAD kinase (292 aa).

Residue Asp73 is the Proton acceptor of the active site. Residues 73–74 (DG), 147–148 (NE), His158, Arg175, Asp177, 188–193 (TAYSLS), and Gln247 contribute to the NAD(+) site.

This sequence belongs to the NAD kinase family. A divalent metal cation is required as a cofactor.

Its subcellular location is the cytoplasm. The enzyme catalyses NAD(+) + ATP = ADP + NADP(+) + H(+). In terms of biological role, involved in the regulation of the intracellular balance of NAD and NADP, and is a key enzyme in the biosynthesis of NADP. Catalyzes specifically the phosphorylation on 2'-hydroxyl of the adenosine moiety of NAD to yield NADP. The chain is NAD kinase from Serratia proteamaculans (strain 568).